A 126-amino-acid polypeptide reads, in one-letter code: MGKTTQKGHRQKSFYRGVRAEKWAAWWLRCKGFHIAEIRFKTKCGEIDLIARRGNLVLIVEVKARSTLAEAMAAVSRVNERRIEAAADIWLARQKDRALLCVRFDLIAILPWRWPQHIPAFFMSNK.

The protein belongs to the UPF0102 family.

The chain is UPF0102 protein BH12350 from Bartonella henselae (strain ATCC 49882 / DSM 28221 / CCUG 30454 / Houston 1) (Rochalimaea henselae).